The following is a 168-amino-acid chain: Large ribosomal subunit protein uL10 (168 aa).

It belongs to the universal ribosomal protein uL10 family. Part of the ribosomal stalk of the 50S ribosomal subunit. The N-terminus interacts with L11 and the large rRNA to form the base of the stalk. The C-terminus forms an elongated spine to which L12 dimers bind in a sequential fashion forming a multimeric L10(L12)X complex.

Forms part of the ribosomal stalk, playing a central role in the interaction of the ribosome with GTP-bound translation factors. The sequence is that of Large ribosomal subunit protein uL10 from Ralstonia nicotianae (strain ATCC BAA-1114 / GMI1000) (Ralstonia solanacearum).